Here is a 331-residue protein sequence, read N- to C-terminus: Glycerol-3-phosphate dehydrogenase [NAD(P)+] (331 aa).

Residues serine 11, phenylalanine 12, arginine 32, and lysine 106 each contribute to the NADPH site. Lysine 106, glycine 134, and serine 136 together coordinate sn-glycerol 3-phosphate. Alanine 138 lines the NADPH pocket. Residues lysine 189, aspartate 242, serine 252, arginine 253, and asparagine 254 each coordinate sn-glycerol 3-phosphate. Residue lysine 189 is the Proton acceptor of the active site. Position 253 (arginine 253) interacts with NADPH. 2 residues coordinate NADPH: valine 277 and glutamate 279.

It belongs to the NAD-dependent glycerol-3-phosphate dehydrogenase family.

It is found in the cytoplasm. The enzyme catalyses sn-glycerol 3-phosphate + NAD(+) = dihydroxyacetone phosphate + NADH + H(+). The catalysed reaction is sn-glycerol 3-phosphate + NADP(+) = dihydroxyacetone phosphate + NADPH + H(+). It functions in the pathway membrane lipid metabolism; glycerophospholipid metabolism. Catalyzes the reduction of the glycolytic intermediate dihydroxyacetone phosphate (DHAP) to sn-glycerol 3-phosphate (G3P), the key precursor for phospholipid synthesis. The chain is Glycerol-3-phosphate dehydrogenase [NAD(P)+] from Clostridium perfringens (strain ATCC 13124 / DSM 756 / JCM 1290 / NCIMB 6125 / NCTC 8237 / Type A).